The chain runs to 561 residues: Dihydroxy-acid dehydratase (561 aa).

Residue C50 coordinates [2Fe-2S] cluster. D82 provides a ligand contact to Mg(2+). C123 serves as a coordination point for [2Fe-2S] cluster. Mg(2+) contacts are provided by D124 and K125. At K125 the chain carries N6-carboxylysine. [2Fe-2S] cluster is bound at residue C195. E447 contributes to the Mg(2+) binding site. Residue S473 is the Proton acceptor of the active site.

This sequence belongs to the IlvD/Edd family. Homodimer. [2Fe-2S] cluster serves as cofactor. It depends on Mg(2+) as a cofactor.

It catalyses the reaction (2R)-2,3-dihydroxy-3-methylbutanoate = 3-methyl-2-oxobutanoate + H2O. It carries out the reaction (2R,3R)-2,3-dihydroxy-3-methylpentanoate = (S)-3-methyl-2-oxopentanoate + H2O. It functions in the pathway amino-acid biosynthesis; L-isoleucine biosynthesis; L-isoleucine from 2-oxobutanoate: step 3/4. The protein operates within amino-acid biosynthesis; L-valine biosynthesis; L-valine from pyruvate: step 3/4. Functionally, functions in the biosynthesis of branched-chain amino acids. Catalyzes the dehydration of (2R,3R)-2,3-dihydroxy-3-methylpentanoate (2,3-dihydroxy-3-methylvalerate) into 2-oxo-3-methylpentanoate (2-oxo-3-methylvalerate) and of (2R)-2,3-dihydroxy-3-methylbutanoate (2,3-dihydroxyisovalerate) into 2-oxo-3-methylbutanoate (2-oxoisovalerate), the penultimate precursor to L-isoleucine and L-valine, respectively. The sequence is that of Dihydroxy-acid dehydratase from Microcystis aeruginosa (strain NIES-843 / IAM M-2473).